Reading from the N-terminus, the 288-residue chain is 2-dehydro-3-deoxyphosphooctonate aldolase (288 aa).

Belongs to the KdsA family.

The protein resides in the cytoplasm. The enzyme catalyses D-arabinose 5-phosphate + phosphoenolpyruvate + H2O = 3-deoxy-alpha-D-manno-2-octulosonate-8-phosphate + phosphate. It participates in carbohydrate biosynthesis; 3-deoxy-D-manno-octulosonate biosynthesis; 3-deoxy-D-manno-octulosonate from D-ribulose 5-phosphate: step 2/3. It functions in the pathway bacterial outer membrane biogenesis; lipopolysaccharide biosynthesis. This chain is 2-dehydro-3-deoxyphosphooctonate aldolase, found in Syntrophobacter fumaroxidans (strain DSM 10017 / MPOB).